Consider the following 470-residue polypeptide: GTPase Der (470 aa).

EngA-type G domains follow at residues 2–165 (KTIA…GLEA) and 201–372 (IRVG…ENFS). GTP-binding positions include 8–15 (GKPNVGKS), 55–59 (DTGGI), 117–120 (NKID), 207–214 (GKVNVGKS), 254–258 (DTAGI), and 318–321 (NKWD). The KH-like domain occupies 373–457 (RRIPTSILNK…PILIRARKRG (85 aa)).

This sequence belongs to the TRAFAC class TrmE-Era-EngA-EngB-Septin-like GTPase superfamily. EngA (Der) GTPase family. In terms of assembly, associates with the 50S ribosomal subunit.

In terms of biological role, GTPase that plays an essential role in the late steps of ribosome biogenesis. This is GTPase Der from Wolinella succinogenes (strain ATCC 29543 / DSM 1740 / CCUG 13145 / JCM 31913 / LMG 7466 / NCTC 11488 / FDC 602W) (Vibrio succinogenes).